The following is a 205-amino-acid chain: Large ribosomal subunit protein uL10 (205 aa).

The segment at 167–205 (AQGAAPAEAKAEAPASEEKAADTPAEQPAESAPEAAPEA) is disordered. Low complexity-rich tracts occupy residues 169-180 (GAAPAEAKAEAP) and 190-205 (PAEQ…APEA).

Belongs to the universal ribosomal protein uL10 family. As to quaternary structure, part of the ribosomal stalk of the 50S ribosomal subunit. The N-terminus interacts with L11 and the large rRNA to form the base of the stalk. The C-terminus forms an elongated spine to which L12 dimers bind in a sequential fashion forming a multimeric L10(L12)X complex.

Forms part of the ribosomal stalk, playing a central role in the interaction of the ribosome with GTP-bound translation factors. The protein is Large ribosomal subunit protein uL10 of Treponema denticola (strain ATCC 35405 / DSM 14222 / CIP 103919 / JCM 8153 / KCTC 15104).